A 125-amino-acid polypeptide reads, in one-letter code: Multifunctional methyltransferase subunit TRM112-like protein (125 aa).

Positions 2–119 constitute a TRM112 domain; it reads KLLTHNLLSS…SRGIPNMLLN (118 aa).

It belongs to the TRM112 family. As to quaternary structure, part of the heterodimeric BUD23-TRM112 methyltransferase complex; this heterodimerization is necessary for the metabolic stability and activity of the catalytic subunit BUD23. Part of the heterodimeric N6AMT1-TRM112 methyltransferase complex; this heterodimerization is necessary for S-adenosyl-L-methionine-binding to N6AMT1/HEMK2. Part of the heterodimeric ALKBH8-TRM112 methyltransferase complex. Part of the heterodimeric METTL5-TRM112 methyltransferase complex; this heterodimerization is necessary for the stability of the catalytic subunit METTL5. Part of the heterodimeric THUMPD3-TRM112 methyltransferase complex; this complex forms an active tRNA methyltransferase, where TRMT112 acts as an activator of the catalytic subunit THUMPD3. Part of the heterodimeric THUMPD2-TRM112 methyltransferase complex; this complex forms an active tRNA methyltransferase, where TRMT112 acts as an activator of the catalytic subunit THUMPD2. Part of the heterodimeric TRMT11-TRM112 methyltransferase complex; this complex forms an active tRNA methyltransferase, where TRMT112 acts as an activator of the catalytic subunit TRMT11. Abundantly expressed in the testis, also expressed in the brain, heart, kidney, liver, lung, muscle and spleen.

Its subcellular location is the nucleus. It is found in the nucleoplasm. It localises to the cytoplasm. The protein resides in the perinuclear region. Acts as an activator of both rRNA/tRNA and protein methyltransferases. Together with methyltransferase BUD23, methylates the N(7) position of a guanine in 18S rRNA. The heterodimer with HEMK2/N6AMT1 catalyzes N5-methylation of ETF1 on 'Gln-185', using S-adenosyl L-methionine as methyl donor. The heterodimer with ALKBH8 catalyzes the methylation of 5-carboxymethyl uridine to 5-methylcarboxymethyl uridine at the wobble position of the anticodon loop in target tRNA species. Together with methyltransferase THUMPD3, catalyzes the formation of N(2)-methylguanosine at position 6 in a broad range of tRNA substrates and at position 7 of tRNA(Trp). Involved in the pre-rRNA processing steps leading to small-subunit rRNA production. Together with methyltransferase METTL5, specifically methylates the 6th position of adenine in position 1832 of 18S rRNA. This Mus musculus (Mouse) protein is Multifunctional methyltransferase subunit TRM112-like protein (Trmt112).